Reading from the N-terminus, the 545-residue chain is RAN GTPase-activating protein 2 (545 aa).

The tract at residues 1-116 (MADILDSRPH…VAARELISED (116 aa)) is WPP. LRR repeat units lie at residues 213–236 (GSILSSLNLSDNALGEKGVRAFGA), 241–264 (LSSLEELYLMNDGISKEAAQAVSE), 269–296 (TENLRVLHFHNNMTGDEGALAIAEVVKR), 325–348 (CTHMEKLDLRDNMFGTEAGVSLSK), 353–380 (FKHMTELYLSYLNLEDEGAIAIVNALKE), 382–405 (ASPIEVLEMAGNDITVEAASAIAA), 410–433 (KQDLNKLNLSENELKDEGCVQIAN), 439–462 (HSKLQYIDMSTNYIRRAGARALAH), and 467–494 (KEAFKLLNIDGNIISEEGIEELKEIFKK). Residues 496 to 545 (PELLGALDENDPDGEEDDDDEEDEEDEENEGNGNGELESKLKNLEVNQED) form a disordered region. Residues 503 to 525 (DENDPDGEEDDDDEEDEEDEENE) are compositionally biased toward acidic residues.

Belongs to the RNA1 family. Homodimer. Interacts with WIP1 and WIP2 through its WPP domain. Component of Ran complexes at least composed of WIT1 or WIT2, RANGAP1 or RANGAP2, and WIP1 or WIP2 or WIP3. Interacts with WIT1.

It is found in the cytoplasm. Its subcellular location is the nucleus membrane. It localises to the cytoskeleton. The protein resides in the spindle. The protein localises to the phragmoplast. Its function is as follows. GTPase activator for the nuclear Ras-related regulatory protein Ran, converting it to the putatively inactive GDP-bound state. This chain is RAN GTPase-activating protein 2 (RANGAP2), found in Arabidopsis thaliana (Mouse-ear cress).